The chain runs to 174 residues: Adenylate kinase (174 aa).

The segment at Ser-12–Val-41 is NMP. AMP is bound by residues Thr-13, Arg-18, Gly-39–Val-41, Gly-67–Arg-70, and Gln-74. The segment at Gly-104–Asp-141 is LID. Residues Arg-105 and Thr-114 to Tyr-115 each bind ATP. Arg-138 and Arg-149 together coordinate AMP.

This sequence belongs to the adenylate kinase family. In terms of assembly, monomer.

It localises to the cytoplasm. It catalyses the reaction AMP + ATP = 2 ADP. Its pathway is purine metabolism; AMP biosynthesis via salvage pathway; AMP from ADP: step 1/1. Catalyzes the reversible transfer of the terminal phosphate group between ATP and AMP. Plays an important role in cellular energy homeostasis and in adenine nucleotide metabolism. The sequence is that of Adenylate kinase from Neisseria animalis.